The following is a 260-amino-acid chain: Flap endonuclease Xni (260 aa).

A Mg(2+)-binding site is contributed by D112. The 5'-3' exonuclease domain occupies 168 to 258 (LQPSQLVDFW…FNLKDLRYTP (91 aa)). Residues L179, V190, and I193 each contribute to the K(+) site. Residues 192-197 (GIGEKT) are interaction with DNA.

This sequence belongs to the Xni family. The cofactor is Mg(2+). It depends on K(+) as a cofactor.

In terms of biological role, has flap endonuclease activity. During DNA replication, flap endonucleases cleave the 5'-overhanging flap structure that is generated by displacement synthesis when DNA polymerase encounters the 5'-end of a downstream Okazaki fragment. The chain is Flap endonuclease Xni from Tolumonas auensis (strain DSM 9187 / NBRC 110442 / TA 4).